The primary structure comprises 72 residues: Putative membrane protein insertion efficiency factor (72 aa).

The protein belongs to the UPF0161 family.

Its subcellular location is the cell inner membrane. Its function is as follows. Could be involved in insertion of integral membrane proteins into the membrane. This chain is Putative membrane protein insertion efficiency factor, found in Myxococcus xanthus (strain DK1622).